A 269-amino-acid chain; its full sequence is Formamidopyrimidine-DNA glycosylase (269 aa).

Proline 2 functions as the Schiff-base intermediate with DNA in the catalytic mechanism. Glutamate 3 serves as the catalytic Proton donor. Lysine 57 serves as the catalytic Proton donor; for beta-elimination activity. Positions 90, 109, and 150 each coordinate DNA. Residues 235–269 (QVYGRKGEPCRVCGTPVVATKHAQRATFYCRHCQK) form an FPG-type zinc finger. The Proton donor; for delta-elimination activity role is filled by arginine 259.

It belongs to the FPG family. As to quaternary structure, monomer. The cofactor is Zn(2+).

The enzyme catalyses Hydrolysis of DNA containing ring-opened 7-methylguanine residues, releasing 2,6-diamino-4-hydroxy-5-(N-methyl)formamidopyrimidine.. It catalyses the reaction 2'-deoxyribonucleotide-(2'-deoxyribose 5'-phosphate)-2'-deoxyribonucleotide-DNA = a 3'-end 2'-deoxyribonucleotide-(2,3-dehydro-2,3-deoxyribose 5'-phosphate)-DNA + a 5'-end 5'-phospho-2'-deoxyribonucleoside-DNA + H(+). Its function is as follows. Involved in base excision repair of DNA damaged by oxidation or by mutagenic agents. Acts as a DNA glycosylase that recognizes and removes damaged bases. Has a preference for oxidized purines, such as 7,8-dihydro-8-oxoguanine (8-oxoG). Has AP (apurinic/apyrimidinic) lyase activity and introduces nicks in the DNA strand. Cleaves the DNA backbone by beta-delta elimination to generate a single-strand break at the site of the removed base with both 3'- and 5'-phosphates. The polypeptide is Formamidopyrimidine-DNA glycosylase (Salmonella arizonae (strain ATCC BAA-731 / CDC346-86 / RSK2980)).